A 207-amino-acid chain; its full sequence is Dephospho-CoA kinase (207 aa).

Residues 10-207 (ILGLTGGIGS…FYLTLRGGQP (198 aa)) enclose the DPCK domain. 18–23 (GSGKSA) is an ATP binding site.

It belongs to the CoaE family.

Its subcellular location is the cytoplasm. The catalysed reaction is 3'-dephospho-CoA + ATP = ADP + CoA + H(+). Its pathway is cofactor biosynthesis; coenzyme A biosynthesis; CoA from (R)-pantothenate: step 5/5. Functionally, catalyzes the phosphorylation of the 3'-hydroxyl group of dephosphocoenzyme A to form coenzyme A. The sequence is that of Dephospho-CoA kinase from Pseudomonas putida (Arthrobacter siderocapsulatus).